A 95-amino-acid chain; its full sequence is Aspartyl/glutamyl-tRNA(Asn/Gln) amidotransferase subunit C (95 aa).

The protein belongs to the GatC family. As to quaternary structure, heterotrimer of A, B and C subunits.

It catalyses the reaction L-glutamyl-tRNA(Gln) + L-glutamine + ATP + H2O = L-glutaminyl-tRNA(Gln) + L-glutamate + ADP + phosphate + H(+). The catalysed reaction is L-aspartyl-tRNA(Asn) + L-glutamine + ATP + H2O = L-asparaginyl-tRNA(Asn) + L-glutamate + ADP + phosphate + 2 H(+). Its function is as follows. Allows the formation of correctly charged Asn-tRNA(Asn) or Gln-tRNA(Gln) through the transamidation of misacylated Asp-tRNA(Asn) or Glu-tRNA(Gln) in organisms which lack either or both of asparaginyl-tRNA or glutaminyl-tRNA synthetases. The reaction takes place in the presence of glutamine and ATP through an activated phospho-Asp-tRNA(Asn) or phospho-Glu-tRNA(Gln). In Chlorobium limicola (strain DSM 245 / NBRC 103803 / 6330), this protein is Aspartyl/glutamyl-tRNA(Asn/Gln) amidotransferase subunit C.